Consider the following 720-residue polypeptide: DNA helicase II (720 aa).

The region spanning 8 to 286 (DSLNDKQREA…IRLEQNYRST (279 aa)) is the UvrD-like helicase ATP-binding domain. ATP contacts are provided by residues 32 to 37 (GSGKTR) and arginine 284. A UvrD-like helicase C-terminal domain is found at 287–564 (SNILSAANAL…QLMTLHSAKG (278 aa)).

This sequence belongs to the helicase family. UvrD subfamily.

The enzyme catalyses Couples ATP hydrolysis with the unwinding of duplex DNA by translocating in the 3'-5' direction.. It carries out the reaction ATP + H2O = ADP + phosphate + H(+). A helicase with DNA-dependent ATPase activity. Unwinds DNA duplexes with 3'-5' polarity. Translocates on single-stranded DNA with 3'-5' polarity. Initiates unwinding more efficiently from a nicked substrate than double-stranded DNA. Involved in the post-incision events of nucleotide excision repair and methyl-directed mismatch repair, and probably also in repair of alkylated DNA. This Escherichia coli (strain K12) protein is DNA helicase II.